The following is a 208-amino-acid chain: Holliday junction resolvase RecU (208 aa).

Mg(2+)-binding residues include Thr86, Asp88, Glu101, and Gln120.

This sequence belongs to the RecU family. Mg(2+) is required as a cofactor.

The protein resides in the cytoplasm. It catalyses the reaction Endonucleolytic cleavage at a junction such as a reciprocal single-stranded crossover between two homologous DNA duplexes (Holliday junction).. Endonuclease that resolves Holliday junction intermediates in genetic recombination. Cleaves mobile four-strand junctions by introducing symmetrical nicks in paired strands. Promotes annealing of linear ssDNA with homologous dsDNA. Required for DNA repair, homologous recombination and chromosome segregation. In Lacticaseibacillus casei (strain BL23) (Lactobacillus casei), this protein is Holliday junction resolvase RecU.